Here is a 248-residue protein sequence, read N- to C-terminus: ATP synthase subunit a (248 aa).

7 helical membrane passes run 29 to 49 (AMLTTCVSLSFFLFLFYCLFS), 85 to 105 (VFPFLFVIFSFILISNVQGLV), 115 to 135 (LIQTMVLALTVFIGVIIIVLA), 143 to 163 (LFLPGGTSIVLAFLLVPIEIV), 176 to 196 (LFANMMAGHTLLKVIAAVAWA), 201 to 221 (GGLLLIAHIVPLGVLVILFGL), and 227 to 247 (LIQAYVFTILSCIYINDAIVL).

Belongs to the ATPase A chain family. In terms of assembly, F-type ATPases have 2 components, CF(1) - the catalytic core - and CF(0) - the membrane proton channel. CF(1) has five subunits: alpha(3), beta(3), gamma(1), delta(1), epsilon(1). CF(0) has three main subunits: a, b and c.

The protein resides in the mitochondrion inner membrane. Functionally, mitochondrial membrane ATP synthase (F(1)F(0) ATP synthase or Complex V) produces ATP from ADP in the presence of a proton gradient across the membrane which is generated by electron transport complexes of the respiratory chain. F-type ATPases consist of two structural domains, F(1) - containing the extramembraneous catalytic core and F(0) - containing the membrane proton channel, linked together by a central stalk and a peripheral stalk. During catalysis, ATP synthesis in the catalytic domain of F(1) is coupled via a rotary mechanism of the central stalk subunits to proton translocation. Key component of the proton channel; it may play a direct role in the translocation of protons across the membrane. The protein is ATP synthase subunit a (ATP6) of Pylaiella littoralis (Seaweed).